A 95-amino-acid polypeptide reads, in one-letter code: Putative protein RDUR (95 aa).

Basic and acidic residues predominate over residues 1–12 (MNNSFNKEDRMS). Residues 1-20 (MNNSFNKEDRMSSDTMVGSC) form a disordered region.

Could play a role in innate immunity against viruses. The chain is Putative protein RDUR from Homo sapiens (Human).